Consider the following 352-residue polypeptide: Molybdenum import ATP-binding protein ModC (352 aa).

Positions 1-229 (MLELNFSQTL…SVMNPWLPKE (229 aa)) constitute an ABC transporter domain. 31–38 (GVSGAGKT) lines the ATP pocket. The 64-residue stretch at 289–352 (QTSIRNVLRA…AQIKSVSITA (64 aa)) folds into the Mop domain.

The protein belongs to the ABC transporter superfamily. Molybdate importer (TC 3.A.1.8) family. As to quaternary structure, the complex is composed of two ATP-binding proteins (ModC), two transmembrane proteins (ModB) and a solute-binding protein (ModA).

The protein resides in the cell inner membrane. It catalyses the reaction molybdate(out) + ATP + H2O = molybdate(in) + ADP + phosphate + H(+). Functionally, part of the ABC transporter complex ModABC involved in molybdenum import. Responsible for energy coupling to the transport system. This Shigella dysenteriae serotype 1 (strain Sd197) protein is Molybdenum import ATP-binding protein ModC.